A 23-amino-acid chain; its full sequence is Basic phospholipase A2 CTs-G6 (23 aa).

Ca(2+) serves as cofactor. In terms of processing, contains 7 disulfide bonds. Expressed by the venom gland.

The protein localises to the secreted. The enzyme catalyses a 1,2-diacyl-sn-glycero-3-phosphocholine + H2O = a 1-acyl-sn-glycero-3-phosphocholine + a fatty acid + H(+). Snake venom phospholipase A2 (PLA2) that induces local edema a few hours after injection (5-10 ug) in the hind paw. PLA2 catalyzes the calcium-dependent hydrolysis of the 2-acyl groups in 3-sn-phosphoglycerides. In Trimeresurus stejnegeri (Chinese green tree viper), this protein is Basic phospholipase A2 CTs-G6.